Consider the following 66-residue polypeptide: Large ribosomal subunit protein bL35 (66 aa).

The protein belongs to the bacterial ribosomal protein bL35 family.

The sequence is that of Large ribosomal subunit protein bL35 from Azorhizobium caulinodans (strain ATCC 43989 / DSM 5975 / JCM 20966 / LMG 6465 / NBRC 14845 / NCIMB 13405 / ORS 571).